Consider the following 278-residue polypeptide: S-formylglutathione hydrolase YeiG (278 aa).

Active-site charge relay system residues include S145, D223, and H256.

The protein belongs to the esterase D family.

The catalysed reaction is S-formylglutathione + H2O = formate + glutathione + H(+). Serine hydrolase involved in the detoxification of formaldehyde. Hydrolyzes S-formylglutathione to glutathione and formate. In Shigella dysenteriae serotype 1 (strain Sd197), this protein is S-formylglutathione hydrolase YeiG (yeiG).